Reading from the N-terminus, the 206-residue chain is Guanylate kinase (206 aa).

Positions 6 to 184 constitute a Guanylate kinase-like domain; the sequence is GTLYIISAPS…ALDDLKAIFR (179 aa). 13–20 lines the ATP pocket; it reads APSGAGKS.

The protein belongs to the guanylate kinase family.

It is found in the cytoplasm. It carries out the reaction GMP + ATP = GDP + ADP. Functionally, essential for recycling GMP and indirectly, cGMP. This is Guanylate kinase from Pseudomonas fluorescens (strain Pf0-1).